The chain runs to 213 residues: LexA repressor 2 (213 aa).

A DNA-binding region (H-T-H motif) is located at residues 27–47; sequence QTEIARAFGFKGVRAAQYHLE. Catalysis depends on for autocatalytic cleavage activity residues Ser-133 and Lys-170.

The protein belongs to the peptidase S24 family. Homodimer.

The catalysed reaction is Hydrolysis of Ala-|-Gly bond in repressor LexA.. Its function is as follows. Represses a number of genes involved in the response to DNA damage (SOS response), including recA and lexA. In the presence of single-stranded DNA, RecA interacts with LexA causing an autocatalytic cleavage which disrupts the DNA-binding part of LexA, leading to derepression of the SOS regulon and eventually DNA repair. This chain is LexA repressor 2, found in Xanthomonas oryzae pv. oryzae (strain KACC10331 / KXO85).